Here is a 190-residue protein sequence, read N- to C-terminus: Guanylate kinase (190 aa).

The region spanning 3 to 185 (NYIFIVSAPS…SLEQFCKYFE (183 aa)) is the Guanylate kinase-like domain. Residue 10-17 (APSGAGKS) coordinates ATP.

This sequence belongs to the guanylate kinase family.

The protein resides in the cytoplasm. It carries out the reaction GMP + ATP = GDP + ADP. In terms of biological role, essential for recycling GMP and indirectly, cGMP. The protein is Guanylate kinase of Francisella tularensis subsp. tularensis (strain FSC 198).